Reading from the N-terminus, the 610-residue chain is UvrABC system protein C (610 aa).

Residues 16–94 (SQPGVYRMYD…IKLYQPRYNV (79 aa)) enclose the GIY-YIG domain. Positions 204 to 239 (DQVLTQLISRMETASQNLEFEEAARIRDQIQAVRRV) constitute a UVR domain.

Belongs to the UvrC family. In terms of assembly, interacts with UvrB in an incision complex.

The protein localises to the cytoplasm. In terms of biological role, the UvrABC repair system catalyzes the recognition and processing of DNA lesions. UvrC both incises the 5' and 3' sides of the lesion. The N-terminal half is responsible for the 3' incision and the C-terminal half is responsible for the 5' incision. This chain is UvrABC system protein C, found in Escherichia coli (strain ATCC 8739 / DSM 1576 / NBRC 3972 / NCIMB 8545 / WDCM 00012 / Crooks).